We begin with the raw amino-acid sequence, 1424 residues long: DNA-directed RNA polymerase subunit beta' (1424 aa).

C60, C62, C75, and C78 together coordinate Zn(2+). Mg(2+)-binding residues include D449, D451, and D453. 4 residues coordinate Zn(2+): C783, C857, C864, and C867.

The protein belongs to the RNA polymerase beta' chain family. In terms of assembly, the RNAP catalytic core consists of 2 alpha, 1 beta, 1 beta' and 1 omega subunit. When a sigma factor is associated with the core the holoenzyme is formed, which can initiate transcription. Requires Mg(2+) as cofactor. The cofactor is Zn(2+).

It catalyses the reaction RNA(n) + a ribonucleoside 5'-triphosphate = RNA(n+1) + diphosphate. DNA-dependent RNA polymerase catalyzes the transcription of DNA into RNA using the four ribonucleoside triphosphates as substrates. The polypeptide is DNA-directed RNA polymerase subunit beta' (Treponema denticola (strain ATCC 35405 / DSM 14222 / CIP 103919 / JCM 8153 / KCTC 15104)).